We begin with the raw amino-acid sequence, 383 residues long: Deoxyuridylate hydroxymethyltransferase (383 aa).

Cysteine 162 is an active-site residue.

The protein belongs to the thymidylate synthase family. Homodimer.

The enzyme catalyses dUMP + (6R)-5,10-methylene-5,6,7,8-tetrahydrofolate + H2O = 5-hydroxymethyl-dUMP + (6S)-5,6,7,8-tetrahydrofolate. In terms of biological role, catalyzes formation of 5-hydroxymethyldeoxyuridylate (5HMdUMP) as a step in the pathway that replaces dTMP by thymidine hypermodifications in the viral genome. As a final result of the pathway of hypermodification, hydroxymethyluracil substitutes for a subset of thymidines in the viral DNA. These modifications probably prevent degradation of viral DNA by the host restriction-modification antiviral defense system. The chain is Deoxyuridylate hydroxymethyltransferase from Bacillus subtilis (Bacteriophage SP01).